The chain runs to 93 residues: Large ribosomal subunit protein eL29 (93 aa).

The span at 1–31 (MAKSKNHSTHHKNRKDHRNGIKKAVVHKKTS) shows a compositional bias: basic residues. Residues 1–33 (MAKSKNHSTHHKNRKDHRNGIKKAVVHKKTSSK) form a disordered region.

It belongs to the eukaryotic ribosomal protein eL29 family.

This Dictyostelium discoideum (Social amoeba) protein is Large ribosomal subunit protein eL29 (rpl29).